Reading from the N-terminus, the 300-residue chain is L-arabinolactonase (300 aa).

Positions 22, 156, and 205 each coordinate a divalent metal cation.

It belongs to the SMP-30/CGR1 family. A divalent metal cation serves as cofactor.

The catalysed reaction is L-arabinono-1,4-lactone + H2O = L-arabinonate + H(+). Catalyzes the cleavage of L-arabino-gamma-lactone to L-arabonate. Is involved in a degradation pathway of L-arabinose that allows A.brasilense to grow on L-arabinose as a sole carbon source. Can also use D-galactono-1,4-lactone as substrate in vitro; however, the enzyme is probably not involved in the metabolism of D-galactose in vivo. This is L-arabinolactonase (araB) from Azospirillum brasilense.